The chain runs to 211 residues: Large ribosomal subunit protein uL3 (211 aa).

Position 150 is an N5-methylglutamine (Q150).

The protein belongs to the universal ribosomal protein uL3 family. In terms of assembly, part of the 50S ribosomal subunit. Forms a cluster with proteins L14 and L19. Post-translationally, methylated by PrmB.

One of the primary rRNA binding proteins, it binds directly near the 3'-end of the 23S rRNA, where it nucleates assembly of the 50S subunit. The protein is Large ribosomal subunit protein uL3 of Pseudomonas entomophila (strain L48).